The sequence spans 111 residues: Glutaredoxin-C2 (111 aa).

One can recognise a Glutaredoxin domain in the interval 3–103 (MQKAKEIVNS…PLLTEAGAIA (101 aa)). Cysteine 23 and cysteine 26 are joined by a disulfide.

It belongs to the glutaredoxin family. CPYC subfamily.

It localises to the cytoplasm. Its function is as follows. Has a glutathione-disulfide oxidoreductase activity in the presence of NADPH and glutathione reductase. Reduces low molecular weight disulfides and proteins. The sequence is that of Glutaredoxin-C2 (GRXC2) from Arabidopsis thaliana (Mouse-ear cress).